Consider the following 360-residue polypeptide: Phospho-N-acetylmuramoyl-pentapeptide-transferase (360 aa).

Transmembrane regions (helical) follow at residues 27–47 (GAIATALFFVFFFGPNIIKSL), 72–92 (TPTMGGLMILSGLFVSTLLWA), 94–114 (LSNHYVWVVLWVMLGYGAIGF), 135–155 (LACEAGVALVACIAMMKLGTP), 167–187 (GYVVDLGLFFLIFGPFVIVAS), 199–219 (GLAIVPVMIAAGTFGIIAYLV), 236–256 (AGELAVVSGAVIGAGLGFLWF), 263–283 (IFMGDTGSLALGGLLGTIAVA), 289–309 (VLAIVGGLFALETLSVIVQVV), and 337–357 (QVVVRFWIIAFVLALVGLSTL).

It belongs to the glycosyltransferase 4 family. MraY subfamily. The cofactor is Mg(2+).

Its subcellular location is the cell inner membrane. The catalysed reaction is UDP-N-acetyl-alpha-D-muramoyl-L-alanyl-gamma-D-glutamyl-meso-2,6-diaminopimeloyl-D-alanyl-D-alanine + di-trans,octa-cis-undecaprenyl phosphate = di-trans,octa-cis-undecaprenyl diphospho-N-acetyl-alpha-D-muramoyl-L-alanyl-D-glutamyl-meso-2,6-diaminopimeloyl-D-alanyl-D-alanine + UMP. Its pathway is cell wall biogenesis; peptidoglycan biosynthesis. Its function is as follows. Catalyzes the initial step of the lipid cycle reactions in the biosynthesis of the cell wall peptidoglycan: transfers peptidoglycan precursor phospho-MurNAc-pentapeptide from UDP-MurNAc-pentapeptide onto the lipid carrier undecaprenyl phosphate, yielding undecaprenyl-pyrophosphoryl-MurNAc-pentapeptide, known as lipid I. The chain is Phospho-N-acetylmuramoyl-pentapeptide-transferase from Beijerinckia indica subsp. indica (strain ATCC 9039 / DSM 1715 / NCIMB 8712).